A 37-amino-acid polypeptide reads, in one-letter code: Large ribosomal subunit protein bL36 (37 aa).

It belongs to the bacterial ribosomal protein bL36 family.

In Salinispora arenicola (strain CNS-205), this protein is Large ribosomal subunit protein bL36.